A 252-amino-acid polypeptide reads, in one-letter code: Ribosomal RNA small subunit methyltransferase J (252 aa).

S-adenosyl-L-methionine-binding positions include Arg-105 to Asp-106, Glu-121 to Arg-122, and Asp-175.

The protein belongs to the methyltransferase superfamily. RsmJ family.

The protein resides in the cytoplasm. The catalysed reaction is guanosine(1516) in 16S rRNA + S-adenosyl-L-methionine = N(2)-methylguanosine(1516) in 16S rRNA + S-adenosyl-L-homocysteine + H(+). Its function is as follows. Specifically methylates the guanosine in position 1516 of 16S rRNA. This chain is Ribosomal RNA small subunit methyltransferase J, found in Pasteurella multocida (strain Pm70).